We begin with the raw amino-acid sequence, 123 residues long: Protein Wnt-3a (123 aa).

The O-palmitoleoyl serine moiety is linked to residue serine 1. A disulfide bridge links cysteine 89 with cysteine 104. A glycan (N-linked (GlcNAc...) asparagine) is linked at asparagine 90.

It belongs to the Wnt family. Post-translationally, disulfide bonds have critical and distinct roles in secretion and activity. Loss of each conserved cysteine results in high molecular weight oxidized Wnt oligomers, which are formed through inter-Wnt disulfide bonding. In terms of processing, palmitoleoylation is required for efficient binding to frizzled receptors. Depalmitoleoylation leads to Wnt signaling pathway inhibition.

The protein resides in the secreted. The protein localises to the extracellular space. It localises to the extracellular matrix. Its function is as follows. Ligand for members of the frizzled family of seven transmembrane receptors. Functions in the canonical Wnt signaling pathway that results in activation of transcription factors of the TCF/LEF family. Required for normal embryonic mesoderm development and formation of caudal somites. Required for normal morphogenesis of the developing neural tube. This chain is Protein Wnt-3a (WNT3A), found in Meleagris gallopavo (Wild turkey).